A 276-amino-acid polypeptide reads, in one-letter code: Ribosomal RNA large subunit methyltransferase E (276 aa).

Residues Gly-52, Phe-54, Asp-72, Asp-90, and Asp-114 each contribute to the S-adenosyl-L-methionine site. Lys-154 functions as the Proton acceptor in the catalytic mechanism. Residues 203–249 are compositionally biased toward low complexity; sequence RAAPTANATPTPTSTSTSTPTSTSTPTSTSTSTPAPTLTQTQTQTPK. The segment at 203-276 is disordered; sequence RAAPTANATP…AKTGASRRTR (74 aa). Residues 265–276 are compositionally biased toward basic residues; that stretch reads AKAKTGASRRTR.

The protein belongs to the class I-like SAM-binding methyltransferase superfamily. RNA methyltransferase RlmE family.

Its subcellular location is the cytoplasm. It carries out the reaction uridine(2552) in 23S rRNA + S-adenosyl-L-methionine = 2'-O-methyluridine(2552) in 23S rRNA + S-adenosyl-L-homocysteine + H(+). In terms of biological role, specifically methylates the uridine in position 2552 of 23S rRNA at the 2'-O position of the ribose in the fully assembled 50S ribosomal subunit. This chain is Ribosomal RNA large subunit methyltransferase E, found in Anaeromyxobacter sp. (strain Fw109-5).